A 94-amino-acid chain; its full sequence is Small ribosomal subunit protein uS19 (94 aa).

Positions 73-94 are disordered; sequence EFAPTRTYRGHGKDAERTTRRR. Residues 83–94 are compositionally biased toward basic and acidic residues; the sequence is HGKDAERTTRRR.

Belongs to the universal ribosomal protein uS19 family.

Its function is as follows. Protein S19 forms a complex with S13 that binds strongly to the 16S ribosomal RNA. The chain is Small ribosomal subunit protein uS19 from Thermomicrobium roseum (strain ATCC 27502 / DSM 5159 / P-2).